Consider the following 152-residue polypeptide: Maintenance of carboxysome distribution protein B (152 aa).

In terms of assembly, self-associates, interacts with McdA probably via the C-terminus of both proteins. Homohexamerizes. Probably a trimer of dimers. Interacts with most of the shell components of the carboxysome (CcmK2, CcmK3, CcmK4, CcmL and CcmO, but not CcmP) via its C-terminus.

It is found in the carboxysome. In terms of biological role, mcdA and McdB together mediate carboxysome (Cb) spacing, size, ultrastructure and probably inheritance in the cell. Together they prevent Cb aggregation. McdA is an ATPase that forms dynamic gradients on the nucleoid in response to adapter protein McdB, which associates with carboxysomes. The interplay between McdA gradients on the nucleoid and McdB-bound carboxysomes result in the equal spacing of Cbs along the cell length. McdB may have an additional function in cell divison. Stimulates the ATPase activity of McdA, causing McdA to be released from DNA. Overexpression leads to loss of McdA oscillation and formation of large Cb aggregates which colocalize with McdB, as well as diffuse McdB staining in the cytoplasm. Undergoes liquid-liquid phase separation between pH 6.5-7.5 and at concentrations between 1 uM and 167 uM. Forms polar foci upon overexpression in E.coli. Functionally, incorrect positioning (aggregation) of carboxysomes results in reduced CO(2) fixation by encapsulated RuBisCO, which leads to slower growth, cell elongation, asymmetric cell division and an increase in RuBisCO levels. This Synechococcus elongatus (strain ATCC 33912 / PCC 7942 / FACHB-805) (Anacystis nidulans R2) protein is Maintenance of carboxysome distribution protein B.